We begin with the raw amino-acid sequence, 208 residues long: Sodium/potassium-transporting ATPase subunit beta-1-interacting protein 4 (208 aa).

3 helical membrane-spanning segments follow: residues Ala35–Ile55, Val62–Phe82, and Cys151–Phe171.

The protein belongs to the NKAIN family. Interacts with ATP1B1.

It is found in the cell membrane. The sequence is that of Sodium/potassium-transporting ATPase subunit beta-1-interacting protein 4 (NKAIN4) from Homo sapiens (Human).